The chain runs to 163 residues: Choriogonadotropin subunit beta variant 2 (163 aa).

An N-terminal signal peptide occupies residues methionine 1–alanine 18. 6 disulfides stabilise this stretch: cysteine 27–cysteine 75, cysteine 41–cysteine 90, cysteine 44–cysteine 128, cysteine 52–cysteine 106, cysteine 56–cysteine 108, and cysteine 111–cysteine 118. Residues asparagine 31 and asparagine 48 are each glycosylated (N-linked (GlcNAc...) asparagine). The segment at aspartate 129 to glutamine 163 is disordered. Residues alanine 141 to leucine 152 are compositionally biased toward pro residues.

This sequence belongs to the glycoprotein hormones subunit beta family. As to expression, expressed in placenta, testis and pituitary.

It is found in the secreted. This is Choriogonadotropin subunit beta variant 2 (CGB2) from Homo sapiens (Human).